Consider the following 694-residue polypeptide: Methionine--tRNA ligase (694 aa).

Residues 12–22 (PYANGPLHLGH) carry the 'HIGH' region motif. C143, C146, C156, and C159 together coordinate Zn(2+). The short motif at 330–334 (KMSKS) is the 'KMSKS' region element. Position 333 (K333) interacts with ATP. Residues 550–577 (LAAPATPATASKPAPAKADAKPAAAANP) form a disordered region. Residues 551–575 (AAPATPATASKPAPAKADAKPAAAA) are compositionally biased toward low complexity. A tRNA-binding domain is found at 591 to 694 (DFAKLDLRIG…SGAQPGMPVR (104 aa)).

Belongs to the class-I aminoacyl-tRNA synthetase family. MetG type 1 subfamily. Homodimer. Zn(2+) serves as cofactor.

The protein resides in the cytoplasm. It carries out the reaction tRNA(Met) + L-methionine + ATP = L-methionyl-tRNA(Met) + AMP + diphosphate. Is required not only for elongation of protein synthesis but also for the initiation of all mRNA translation through initiator tRNA(fMet) aminoacylation. The protein is Methionine--tRNA ligase of Xanthomonas axonopodis pv. citri (strain 306).